A 178-amino-acid polypeptide reads, in one-letter code: Neuroblastoma suppressor of tumorigenicity 1 (178 aa).

The signal sequence occupies residues 1 to 16; that stretch reads MLWVLVGTVLPVMLLA. 5 cysteine pairs are disulfide-bonded: cysteine 34-cysteine 84, cysteine 48-cysteine 98, cysteine 58-cysteine 117, cysteine 62-cysteine 119, and cysteine 81-cysteine 122. Residues 34 to 123 form the CTCK domain; that stretch reads CEAKNITQIV…IVHCSCQACG (90 aa). The disordered stretch occupies residues 130–178; the sequence is GLNVYMQGEDGPGSQPGSHSHSHPHPGCQTPEPEEPPGAPQVEEEGAED.

It belongs to the DAN family. As to quaternary structure, homodimer. As to expression, most abundant in lung, brain, intestine and kidney.

The protein localises to the secreted. Its function is as follows. Possible candidate as a tumor suppressor gene of neuroblastoma. May play an important role in preventing cells from entering the final stage (G1/S) of the transformation process. The sequence is that of Neuroblastoma suppressor of tumorigenicity 1 (Nbl1) from Rattus norvegicus (Rat).